Here is an 898-residue protein sequence, read N- to C-terminus: Vacuolar protein sorting-associated protein 41 homolog (898 aa).

Residues 1 to 10 (MDESNDKENE) show a composition bias toward basic and acidic residues. The segment at 1–35 (MDESNDKENEFGDSFLEDSGDITRTTEDEDEAPLE) is disordered. A CHCR repeat occupies 614–756 (LRLLLDNADS…VADFPTHFSQ (143 aa)). The segment at 835-890 (CSLCSQVIMNTGQDMIPRKFNDIKVFKCGHIFHLTCSASEIDRRQMIEDGICIACS) adopts an RING-type; atypical zinc-finger fold.

This sequence belongs to the VPS41 family. Probable component of the homotypic fusion and vacuole protein sorting (HOPS) complex consisting of the core class C Vps proteins vps-11, vps-16, vps-18, and which further associates with vps-33.1, vps-39 and vps-41.

The protein resides in the endosome membrane. The protein localises to the late endosome. It localises to the lysosome. It is found in the golgi apparatus. Its subcellular location is the trans-Golgi network. The protein resides in the early endosome. The protein localises to the cytoplasmic vesicle. It localises to the clathrin-coated vesicle. In terms of biological role, plays a role in vesicle-mediated protein trafficking to lysosomal compartments including the endocytic membrane transport pathways. Believed to act in part as a core component of the putative HOPS endosomal tethering complex which is proposed to be involved in the rab-5-to-rab-7 endosome conversion probably implicating sand-1, and via binding SNAREs and SNARE complexes to mediate tethering and docking events during SNARE-mediated membrane fusion. The HOPS complex is proposed to be recruited to rab-7 on the late endosomal membrane and to regulate late endocytic, phagocytic and autophagic traffic towards lysosomes. Within the HOPS complex, contributes to the normal development of gut granules in the adult intestine. May mediate the tethering of autophagosomes with lysosomes. Has a role in the negative regulation of apoptosis. Required for uptake of exogenous dsRNA which is used in experimental RNA silencing. The chain is Vacuolar protein sorting-associated protein 41 homolog from Caenorhabditis briggsae.